A 367-amino-acid chain; its full sequence is Polygalacturonase (367 aa).

The first 19 residues, 1–19 (MSIRLIAVLSAASIAVTSA), serve as a signal peptide directing secretion. A disulfide bond links cysteine 27 and cysteine 42. N-linked (GlcNAc...) asparagine glycosylation is present at asparagine 185. Residues 187–208 (TDQLTIEDTVVKNQDDCIAVNQ) form a PbH1 1 repeat. The active-site Proton donor is aspartate 201. Residues cysteine 203 and cysteine 219 are joined by a disulfide bond. Residue histidine 223 is part of the active site. A PbH1 2 repeat occupies 240 to 261 (VRNVTFSNSVVRKSRNGIHIKT). N-linked (GlcNAc...) asparagine glycosylation is present at asparagine 242. A disulfide bond links cysteine 334 and cysteine 339. Residues asparagine 343 and asparagine 357 are each glycosylated (N-linked (GlcNAc...) asparagine). A disulfide bridge links cysteine 358 with cysteine 367.

Belongs to the glycosyl hydrolase 28 family. Expressed in larval carcasses and gut, and adult gut.

The protein resides in the secreted. It is found in the cell wall. It catalyses the reaction (1,4-alpha-D-galacturonosyl)n+m + H2O = (1,4-alpha-D-galacturonosyl)n + (1,4-alpha-D-galacturonosyl)m.. In Phaedon cochleariae (Mustard beetle), this protein is Polygalacturonase.